We begin with the raw amino-acid sequence, 418 residues long: Beta-arrestin-1 (418 aa).

Residues 1–163 form an interaction with SRC region; the sequence is MGDKGTRVFK…LEEKIHKRNS (163 aa). An interaction with CHRM2 region spans residues 45 to 86; it reads PEYLKERRVYVTLTCAFRYGREDLDVLGLTFRKDLFVANVQS. The residue at position 47 (Tyr47) is a Phosphotyrosine. 4 residues coordinate 1D-myo-inositol hexakisphosphate: Lys250, Met255, Lys324, and Lys326. Residues 318-418 form an interaction with TRAF6 region; that stretch reads IVSYKVKVKL…GTGSPRLNDR (101 aa). Residues 353–375 form a disordered region; that stretch reads HPKPKEEPPHREVPEHETPVDTN. Over residues 355–371 the composition is skewed to basic and acidic residues; that stretch reads KPKEEPPHREVPEHETP. Positions 385-395 match the [DE]-X(1,2)-F-X-X-[FL]-X-X-X-R motif motif; the sequence is DIVFEDFARQR. The tract at residues 397-418 is disordered; sequence KGMKDDKEEEEDGTGSPRLNDR. Ser412 is modified (phosphoserine; by GRK5).

The protein belongs to the arrestin family. Monomer. Homodimer. Homooligomer; the self-association is mediated by InsP6-binding. Heterooligomer with ARRB2; the association is mediated by InsP6-binding. Interacts with ADRB2 (phosphorylated). Interacts with CHRM2 (phosphorylated). Interacts with LHCGR. Interacts with CYTH2 and CASR. Interacts with AP2B1 (dephosphorylated at 'Tyr-737'); phosphorylation of AP2B1 at 'Tyr-737' disrupts the interaction. Interacts (dephosphorylated at Ser-412) with CLTC. Interacts with CCR2 and GRK2. Interacts with CRR5. Interacts with PTAFR (phosphorylated on serine residues). Interacts with CLTC and MAP2K3. Interacts with CREB1. Interacts with TRAF6. Interacts with IGF1R and MDM2. Interacts with C5AR1. Interacts with PDE4D. Interacts with SRC (via the SH3 domain and the protein kinase domain); the interaction is independent of the phosphorylation state of SRC C-terminus. Interacts with TACR1. Interacts with RAF1. Interacts with CHUK, IKBKB and MAP3K14. Interacts with DVL1; the interaction is enhanced by phosphorylation of DVL1. Interacts with DVL2; the interaction is enhanced by phosphorylation of DVL2. Interacts with IGF1R. Associates with MAP kinase p38. Part of a MAPK signaling complex consisting of TACR1, ARRB1, SRC, MAPK1 (activated) and MAPK3 (activated). Part of a MAPK signaling complex consisting of F2RL1, ARRB1, RAF1, MAPK1 (activated) and MAPK3 (activated). Interacts with GPR143. Interacts with MAP2K4/MKK4. Interacts with HCK and CXCR1 (phosphorylated). Interacts with ACKR3 and ACKR4. Interacts with ARRDC1; the interaction is direct. Interacts with GPR61, GPR62 and GPR135. Post-translationally, constitutively phosphorylated at Ser-412 in the cytoplasm. At the plasma membrane, is rapidly dephosphorylated, a process that is required for clathrin binding and ADRB2 endocytosis but not for ADRB2 binding and desensitization. Once internalized, is rephosphorylated. In terms of processing, the ubiquitination status appears to regulate the formation and trafficking of beta-arrestin-GPCR complexes and signaling. Ubiquitination appears to occur GPCR-specific. Ubiquitinated by MDM2; the ubiquitination is required for rapid internalization of ADRB2. Deubiquitinated by USP33; the deubiquitination leads to a dissociation of the beta-arrestin-GPCR complex. Stimulation of a class A GPCR, such as ADRB2, induces transient ubiquitination and subsequently promotes association with USP33. In terms of tissue distribution, beta-arrestin 1A is found in cortex, cerebellum, striatum, pineal gland, retina and heart. Beta-arrestin 1B is found in spleen, lung, pituitary and kidney.

The protein localises to the cytoplasm. The protein resides in the nucleus. Its subcellular location is the cell membrane. It is found in the membrane. It localises to the clathrin-coated pit. The protein localises to the cell projection. The protein resides in the pseudopodium. Its subcellular location is the cytoplasmic vesicle. Functions in regulating agonist-mediated G-protein coupled receptor (GPCR) signaling by mediating both receptor desensitization and resensitization processes. During homologous desensitization, beta-arrestins bind to the GPRK-phosphorylated receptor and sterically preclude its coupling to the cognate G-protein; the binding appears to require additional receptor determinants exposed only in the active receptor conformation. The beta-arrestins target many receptors for internalization by acting as endocytic adapters (CLASPs, clathrin-associated sorting proteins) and recruiting the GPRCs to the adapter protein 2 complex 2 (AP-2) in clathrin-coated pits (CCPs). However, the extent of beta-arrestin involvement appears to vary significantly depending on the receptor, agonist and cell type. Internalized arrestin-receptor complexes traffic to intracellular endosomes, where they remain uncoupled from G-proteins. Two different modes of arrestin-mediated internalization occur. Class A receptors, like ADRB2, OPRM1, ENDRA, D1AR and ADRA1B dissociate from beta-arrestin at or near the plasma membrane and undergo rapid recycling. Class B receptors, like AVPR2, AGTR1, NTSR1, TRHR and TACR1 internalize as a complex with arrestin and traffic with it to endosomal vesicles, presumably as desensitized receptors, for extended periods of time. Receptor resensitization then requires that receptor-bound arrestin is removed so that the receptor can be dephosphorylated and returned to the plasma membrane. Involved in internalization of P2RY4 and UTP-stimulated internalization of P2RY2. Involved in phosphorylation-dependent internalization of OPRD1 ands subsequent recycling. Involved in the degradation of cAMP by recruiting cAMP phosphodiesterases to ligand-activated receptors. Beta-arrestins function as multivalent adapter proteins that can switch the GPCR from a G-protein signaling mode that transmits short-lived signals from the plasma membrane via small molecule second messengers and ion channels to a beta-arrestin signaling mode that transmits a distinct set of signals that are initiated as the receptor internalizes and transits the intracellular compartment. Acts as a signaling scaffold for MAPK pathways such as MAPK1/3 (ERK1/2). ERK1/2 activated by the beta-arrestin scaffold is largely excluded from the nucleus and confined to cytoplasmic locations such as endocytic vesicles, also called beta-arrestin signalosomes. Recruits c-Src/SRC to ADRB2 resulting in ERK activation. GPCRs for which the beta-arrestin-mediated signaling relies on both ARRB1 and ARRB2 (codependent regulation) include ADRB2, F2RL1 and PTH1R. For some GPCRs the beta-arrestin-mediated signaling relies on either ARRB1 or ARRB2 and is inhibited by the other respective beta-arrestin form (reciprocal regulation). Inhibits ERK1/2 signaling in AGTR1- and AVPR2-mediated activation (reciprocal regulation). Is required for SP-stimulated endocytosis of NK1R and recruits c-Src/SRC to internalized NK1R resulting in ERK1/2 activation, which is required for the antiapoptotic effects of SP. Is involved in proteinase-activated F2RL1-mediated ERK activity. Acts as a signaling scaffold for the AKT1 pathway. Is involved in alpha-thrombin-stimulated AKT1 signaling. Is involved in IGF1-stimulated AKT1 signaling leading to increased protection from apoptosis. Involved in activation of the p38 MAPK signaling pathway and in actin bundle formation. Involved in F2RL1-mediated cytoskeletal rearrangement and chemotaxis. Involved in AGTR1-mediated stress fiber formation by acting together with GNAQ to activate RHOA. Appears to function as signaling scaffold involved in regulation of MIP-1-beta-stimulated CCR5-dependent chemotaxis. Involved in attenuation of NF-kappa-B-dependent transcription in response to GPCR or cytokine stimulation by interacting with and stabilizing CHUK. May serve as nuclear messenger for GPCRs. Involved in OPRD1-stimulated transcriptional regulation by translocating to CDKN1B and FOS promoter regions and recruiting EP300 resulting in acetylation of histone H4. Involved in regulation of LEF1 transcriptional activity via interaction with DVL1 and/or DVL2 Also involved in regulation of receptors other than GPCRs. Involved in Toll-like receptor and IL-1 receptor signaling through the interaction with TRAF6 which prevents TRAF6 autoubiquitination and oligomerization required for activation of NF-kappa-B and JUN. Involved in IL8-mediated granule release in neutrophils. Binds phosphoinositides. Binds inositol hexakisphosphate (InsP6). Required for atypical chemokine receptor ACKR2-induced RAC1-LIMK1-PAK1-dependent phosphorylation of cofilin (CFL1) and for the up-regulation of ACKR2 from endosomal compartment to cell membrane, increasing its efficiency in chemokine uptake and degradation. Involved in the internalization of the atypical chemokine receptor ACKR3. Negatively regulates the NOTCH signaling pathway by mediating the ubiquitination and degradation of NOTCH1 by ITCH. Participates in the recruitment of the ubiquitin-protein ligase to the receptor. This chain is Beta-arrestin-1 (ARRB1), found in Bos taurus (Bovine).